We begin with the raw amino-acid sequence, 269 residues long: MLRIAIVGAGGRMGRNLIQAVQQTEGLSLMAAFEREGSSLIGTDVGELVGISPLGITISACLAEKTADFDVLIDFTRPEATLEYLKFCLANDKKIVIGTTGFDENGKQAIKQASQKIAIVFASNYSVGVNLVFKLLEKAAKVMGNYCDIEIIEAHHKHKVDAPSGTALSMGEHIAKTLGRDLKTDAVFERYGIMDERQTNQIGFATIRAGDIVGEHSVWFVDEGERVEISHKATSRMTFAKGAVCAAQWLANQPQGLFDMTNVLALDQL.

NAD(+) is bound by residues 8-13 (GAGGRM) and Glu-34. An NADP(+)-binding site is contributed by Arg-35. NAD(+) is bound by residues 98 to 100 (GTT) and 122 to 125 (ASNY). His-155 (proton donor/acceptor) is an active-site residue. His-156 contacts (S)-2,3,4,5-tetrahydrodipicolinate. The active-site Proton donor is the Lys-159. Residue 165–166 (GT) participates in (S)-2,3,4,5-tetrahydrodipicolinate binding.

Belongs to the DapB family.

Its subcellular location is the cytoplasm. It catalyses the reaction (S)-2,3,4,5-tetrahydrodipicolinate + NAD(+) + H2O = (2S,4S)-4-hydroxy-2,3,4,5-tetrahydrodipicolinate + NADH + H(+). It carries out the reaction (S)-2,3,4,5-tetrahydrodipicolinate + NADP(+) + H2O = (2S,4S)-4-hydroxy-2,3,4,5-tetrahydrodipicolinate + NADPH + H(+). It functions in the pathway amino-acid biosynthesis; L-lysine biosynthesis via DAP pathway; (S)-tetrahydrodipicolinate from L-aspartate: step 4/4. Catalyzes the conversion of 4-hydroxy-tetrahydrodipicolinate (HTPA) to tetrahydrodipicolinate. This chain is 4-hydroxy-tetrahydrodipicolinate reductase, found in Haemophilus ducreyi (strain 35000HP / ATCC 700724).